Reading from the N-terminus, the 233-residue chain is MADS-box transcription factor 56 (233 aa).

Positions 1–61 constitute an MADS-box domain; the sequence is MVRGRTELKR…GRLYEFASAP (61 aa). Positions 87–177 constitute a K-box domain; the sequence is IQQVKDDTLG…RGKHRNLEAA (91 aa).

Its subcellular location is the nucleus. In terms of biological role, probable transcription factor. The sequence is that of MADS-box transcription factor 56 (MADS56) from Oryza sativa subsp. japonica (Rice).